The chain runs to 472 residues: MMQHASPAPALTMMATQNVPPPPYQDSPQMTATTQPPSKAQAVHISAPSAAASTPVPSAPIDPQAQLEADKRAVYRHPLFPLLTLLFEKCEQATQGSECITSASFDVDIENFVHQQEQEHKPFFSDDPELDNLMVKAIQVLRIHLLELEKVNELCKDFCNRYITCLKTKMHSDNLLRNDLGGPYSPNQPSINLHSQDLLQNSPNSMSGVSNNPQGIVVPASALQQGNIAMTTVNSQVVSGGALYQPVTMVTSQGQVVTQAIPQGAIQIQNTQVNLDLTSLLDNEDKKSKNKRGVLPKHATNIMRSWLFQHLMHPYPTEDEKRQIAAQTNLTLLQVNNWFVNARRRILQPMLDASNPDPAPKAKKIKSQHRPTQRFWPNSIAAGVLQQQGGAPGTNPDGSINLDNLQSLSSDNATMAMQQAMMAAHDDSLDGTEEEDEDEMEEEEEEELEEEVDELQTTNVSDLGLEHSDSLV.

A disordered region spans residues 1–62 (MMQHASPAPA…STPVPSAPID (62 aa)). Residues 26-38 (DSPQMTATTQPPS) are compositionally biased toward polar residues. The segment covering 46-56 (SAPSAAASTPV) has biased composition (low complexity). Residues 96 to 179 (GSECITSASF…MHSDNLLRND (84 aa)) form the MEIS N-terminal domain. The segment at residues 291 to 350 (KRGVLPKHATNIMRSWLFQHLMHPYPTEDEKRQIAAQTNLTLLQVNNWFVNARRRILQPM) is a DNA-binding region (homeobox). 3 disordered regions span residues 351–371 (LDAS…QHRP), 386–405 (QQQG…LDNL), and 423–472 (AAHD…DSLV). The segment covering 361–371 (KAKKIKSQHRP) has biased composition (basic residues). Residues 396 to 405 (PDGSINLDNL) are compositionally biased toward polar residues. Over residues 429–454 (LDGTEEEDEDEMEEEEEEELEEEVDE) the composition is skewed to acidic residues.

The protein belongs to the TALE/MEIS homeobox family.

The protein resides in the nucleus. The protein is Homeobox protein PKNOX2 (PKNOX2) of Pongo abelii (Sumatran orangutan).